A 196-amino-acid polypeptide reads, in one-letter code: Acyl-homoserine-lactone synthase (196 aa).

Belongs to the autoinducer synthase family.

It carries out the reaction a fatty acyl-[ACP] + S-adenosyl-L-methionine = an N-acyl-L-homoserine lactone + S-methyl-5'-thioadenosine + holo-[ACP] + H(+). Required for the synthesis of a yet unknown N-aceyl-homoserine lactone (N-aceyl-HSL), an autoinducer molecule which binds to PhzR and thus regulates phenazine production. This Pseudomonas fluorescens protein is Acyl-homoserine-lactone synthase (phzI).